We begin with the raw amino-acid sequence, 174 residues long: 2-oxo-4-hydroxy-4-carboxy-5-ureidoimidazoline decarboxylase (174 aa).

The Proton donor role is filled by His67. Residues Pro68, 84–88 (SQEEQ), and 119–123 (FVICA) contribute to the substrate site. A Microbody targeting signal motif is present at residues 172-174 (TKL).

This sequence belongs to the OHCU decarboxylase family. As to quaternary structure, homodimer.

The protein localises to the peroxisome. The enzyme catalyses 5-hydroxy-2-oxo-4-ureido-2,5-dihydro-1H-imidazole-5-carboxylate + H(+) = (S)-allantoin + CO2. It functions in the pathway purine metabolism; urate degradation; (S)-allantoin from urate: step 3/3. In terms of biological role, catalyzes the stereoselective decarboxylation of 2-oxo-4-hydroxy-4-carboxy-5-ureidoimidazoline (OHCU) to (S)-allantoin. The polypeptide is 2-oxo-4-hydroxy-4-carboxy-5-ureidoimidazoline decarboxylase (urad) (Danio rerio (Zebrafish)).